The following is a 269-amino-acid chain: Large ribosomal subunit protein uL3m (269 aa).

A mitochondrion-targeting transit peptide spans 1–19 (MSKFLQGSIFSISKLHVRY).

It belongs to the universal ribosomal protein uL3 family. As to quaternary structure, component of the mitochondrial large ribosomal subunit (mt-LSU). Mature yeast 74S mitochondrial ribosomes consist of a small (37S) and a large (54S) subunit. The 37S small subunit contains a 15S ribosomal RNA (15S mt-rRNA) and 34 different proteins. The 54S large subunit contains a 21S rRNA (21S mt-rRNA) and 46 different proteins.

It is found in the mitochondrion. Functionally, component of the mitochondrial ribosome (mitoribosome), a dedicated translation machinery responsible for the synthesis of mitochondrial genome-encoded proteins, including at least some of the essential transmembrane subunits of the mitochondrial respiratory chain. The mitoribosomes are attached to the mitochondrial inner membrane and translation products are cotranslationally integrated into the membrane. This chain is Large ribosomal subunit protein uL3m (MRPL9), found in Saccharomyces cerevisiae (strain ATCC 204508 / S288c) (Baker's yeast).